Here is a 265-residue protein sequence, read N- to C-terminus: Early E4 31 kDa protein (265 aa).

The protein belongs to the adenoviridae E4 30 to 34 kDa protein family. Interacts with E1B-55k.

It localises to the host nucleus. Its subcellular location is the host cytoplasm. In terms of biological role, plays a major role to prevent cellular inhibition of viral genome replication by nuclear bodies. Assembles an SCF-like E3 ubiquitin ligase complex based on the cellular proteins ELOB, ELOC, CUL5 and RBX1, in cooperation with viral E1B-55K. This viral RING-type ligase ubiquitinates cellular substrates prior to proteasomal degradation: p53/TP53, LIG4, MRE11-RAD50-NBS1 (MRN) complex, ITGA3, DAXX and BLM. This is Early E4 31 kDa protein from Canine adenovirus serotype 1 (strain RI261) (CAdV-1).